A 435-amino-acid polypeptide reads, in one-letter code: T-box transcription factor T (435 aa).

The segment at residues 51–219 (LWLRFKELTN…YNPFAKAFLD (169 aa)) is a DNA-binding region (T-box). Disordered stretches follow at residues 280–310 (PALR…PSAC) and 384–412 (APLG…DVPD). A compositionally biased stretch (polar residues) spans 297-310 (RNNSPTYSDNPSAC).

Monomer. Binds DNA as a monomer.

Its subcellular location is the nucleus. Involved in the transcriptional regulation of genes required for mesoderm formation and differentiation. Binds to a palindromic site (called T site) and activates gene transcription when bound to such a site. The chain is T-box transcription factor T from Canis lupus familiaris (Dog).